The chain runs to 302 residues: Ribosome-binding factor PSRP1, chloroplastic (302 aa).

A chloroplast-targeting transit peptide spans 1–66 (MATLCTSAIN…SRNKPNVVCM (66 aa)).

In terms of assembly, binds to the mRNA channel of the chloroplast small ribosomal subunit and interacts with 16S sRNA nucleotides at the A-site and P-site.

Its subcellular location is the plastid. The protein resides in the chloroplast stroma. Functionally, ribosome-binding factor involved in light- and temperature-dependent control of protein synthesis. Interacts with 16S sRNA nucleotides at the A-site and P-site, where it protects the decoding center and inhibits translation by preventing tRNA binding. Stabilizes 70S ribosomes against dissociation. May be recycled by the combined action of ribosome-recycling factor (RRF) and EF-G. The chain is Ribosome-binding factor PSRP1, chloroplastic (PSRP1) from Spinacia oleracea (Spinach).